We begin with the raw amino-acid sequence, 228 residues long: Translin (228 aa).

Residues 86-90 (RFHEH) are DNA/RNA binding. The tract at residues 177–198 (LDSGFRLLNLKNDSLRKRYDGL) is leucine-zipper. Lysine 187 is subject to N6-acetyllysine. Serine 190 is subject to Phosphoserine. Residue lysine 199 is modified to N6-acetyllysine.

Belongs to the translin family. In terms of assembly, ring-shaped heterooctamer of six TSN and two TSNAX subunits, DNA/RNA binding occurs inside the ring.

Its subcellular location is the cytoplasm. The protein localises to the nucleus. Functionally, DNA-binding protein that specifically recognizes consensus sequences at the breakpoint junctions in chromosomal translocations, mostly involving immunoglobulin (Ig)/T-cell receptor gene segments. Seems to recognize single-stranded DNA ends generated by staggered breaks occurring at recombination hot spots. In terms of biological role, exhibits both single-stranded and double-stranded endoribonuclease activity. May act as an activator of RNA-induced silencing complex (RISC) by facilitating endonucleolytic cleavage of the siRNA passenger strand. The protein is Translin (TSN) of Bos taurus (Bovine).